The primary structure comprises 132 residues: Fatty acid-binding protein, brain (132 aa).

The residue at position 2 (Val-2) is an N-acetylvaline. 127 to 129 (RHY) contacts a fatty acid.

This sequence belongs to the calycin superfamily. Fatty-acid binding protein (FABP) family. As to quaternary structure, monomer.

The protein resides in the cytoplasm. FABPs are thought to play a role in the intracellular transport of long-chain fatty acids and their acyl-CoA esters. Binds oleic and palmitic acids but not palmitoyl CoA. The polypeptide is Fatty acid-binding protein, brain (FABP7) (Bos taurus (Bovine)).